Reading from the N-terminus, the 252-residue chain is Demethylmenaquinone methyltransferase (252 aa).

S-adenosyl-L-methionine is bound by residues Thr-64, Asp-85, and 112-113 (NA).

It belongs to the class I-like SAM-binding methyltransferase superfamily. MenG/UbiE family.

The catalysed reaction is a 2-demethylmenaquinol + S-adenosyl-L-methionine = a menaquinol + S-adenosyl-L-homocysteine + H(+). It participates in quinol/quinone metabolism; menaquinone biosynthesis; menaquinol from 1,4-dihydroxy-2-naphthoate: step 2/2. Methyltransferase required for the conversion of demethylmenaquinol (DMKH2) to menaquinol (MKH2). The protein is Demethylmenaquinone methyltransferase of Lactococcus lactis subsp. lactis (strain IL1403) (Streptococcus lactis).